A 360-amino-acid polypeptide reads, in one-letter code: Codeine O-demethylase (360 aa).

In terms of domain architecture, Fe2OG dioxygenase spans 211–311 (GLQTMRMNYY…RLSIATFHDS (101 aa)). Tyr220 is a 2-oxoglutarate binding site. Residues His235, Asp237, and His292 each coordinate Fe cation. Residues Arg302 and Ser304 each contribute to the 2-oxoglutarate site.

This sequence belongs to the iron/ascorbate-dependent oxidoreductase family. L-ascorbate is required as a cofactor. The cofactor is Fe cation. As to expression, mainly expressed in stems, capsules and leaves and, to a lower extent, in roots.

It carries out the reaction codeine + 2-oxoglutarate + O2 = morphine + formaldehyde + succinate + CO2. It catalyses the reaction thebaine + 2-oxoglutarate + O2 = oripavine + formaldehyde + succinate + CO2. The enzyme catalyses (S)-scoulerine + 2-oxoglutarate + O2 = (S)-3-O-demethylscoulerine + formaldehyde + succinate + CO2. The catalysed reaction is thebaine + 2-oxoglutarate + O2 = neopinone + formaldehyde + succinate + CO2. It carries out the reaction (S)-reticuline + 2-oxoglutarate + O2 = (S)-6-O-demethylreticuline + formaldehyde + succinate + CO2. It catalyses the reaction (S)-tetrahydropalmatine + S-adenosyl-L-methionine = (S)-cis-N-methyltetrahydropalmatine + S-adenosyl-L-homocysteine. It participates in alkaloid biosynthesis; morphine biosynthesis. Moderate substrate inhibition. Not inhibited in vitro by acylcyclohexanediones. Functionally, non-heme dioxygenase involved in biosynthesis of morphinan-type benzylisoquinoline and opiate alkaloids natural products. Mediates the conversion of codeine to morphine. Also catalyzes, with lower efficiency, the 3-O-demethylation of thebaine to oripavine and of (S)-scoulerine to 3-O-demethylscoulerine. Supports, with a lower turnover, the conversion of codeinone to morphinone, of thebaine to neopinone, and of neopine to neomorphine. Supports dealkylation reactions such as O,O-demethylenation in the metabolism of protopine, benzo[c]phenanthridine, and rhoeadine alkaloids; cleaves a methylenedioxy bridge leaving two hydroxyl groups. Catalyzes the O,O-demethylenation of methylenedioxy bridges on protopine alkaloids such as allocryptopine, cryptopine and protopine. No activity with (S)-reticuline, salutaridine, papaverine, (S)-corytuberine, oripavine, pavine or noscapine. This chain is Codeine O-demethylase, found in Papaver somniferum (Opium poppy).